The following is a 1181-amino-acid chain: Katanin p80 WD40 repeat-containing subunit B1 homolog KTN80.2 (1181 aa).

WD repeat units follow at residues 13-53 (AHSA…SLMS), 56-95 (GHTS…MVRA), 98-137 (GHRS…CIQT), 140-181 (GHSR…HEFK), 183-221 (HEGP…LIGS), 224-264 (PEAT…DGVD), and 266-303 (GWST…IEPY). Residues 114 to 130 (FLASGSSDANLKIWDIR) carry the DWD box motif. Disordered regions lie at residues 361–383 (AHKS…NKSL), 503–597 (KPPR…ESKS), 702–739 (TSMA…QTRT), 754–869 (KMKS…VIST), and 988–1008 (TKTQ…ISGR). Composition is skewed to polar residues over residues 365-379 (GSLS…QAGD) and 509-526 (RSPS…STDS). Basic and acidic residues-rich tracts occupy residues 530–553 (DSKK…DDRG) and 569–585 (RSER…ELKS). Polar residues-rich tracts occupy residues 703–739 (SMAT…QTRT), 754–791 (KMKS…TRTS), 822–841 (SATN…QAKT), and 850–859 (ILNQRQTTNM). The segment covering 998 to 1008 (TQKEEPQISGR) has biased composition (basic and acidic residues).

This sequence belongs to the WD repeat KATNB1 family. In terms of assembly, component of KTN80-KTN1 complexes composed of a hexamer of KTN1-KTN80 heterodimers that sense microtubule (MT) geometry to confer precise MT severing. Interacts directly with AAA1/KTN1. Interacts with subunits of the CUL4-based E3 ligase complex DDB1A and DDB1B. In terms of tissue distribution, expressed at low levels in siliques, flowers, leaves, stems and roots.

Its subcellular location is the cytoplasm. The protein localises to the cytoskeleton. Its function is as follows. May participate in a complex which severs microtubules in an ATP-dependent manner. Microtubule severing may promote rapid reorganization of cellular microtubule arrays. Confers precision to microtubule (MT) severing by specific targeting of KTN1 to MT cleavage sites such as crossover or branching nucleation sites. Together with other KTN80s, regulates cell elongation by modulating MT organization. Negative regulator of abscisic acid (ABA) responses. May function as a substrate receptor for cullin-RING ubiquitin ligase 4 complexes (CRL4), a family of E3 ligases involved in protein degradation. The polypeptide is Katanin p80 WD40 repeat-containing subunit B1 homolog KTN80.2 (Arabidopsis thaliana (Mouse-ear cress)).